We begin with the raw amino-acid sequence, 158 residues long: Transcription factor BTF3 homolog 4 (158 aa).

K5 is modified (N6-methyllysine). In terms of domain architecture, NAC-A/B spans 33–98; sequence TADDKKLQSS…AEAKPITEML (66 aa). T111 is modified (phosphothreonine). Residues 123–158 form a disordered region; it reads QVLDSKTPKPEDIDEEEDDVPDLVENFDEASKNEAN. The span at 134–150 shows a compositional bias: acidic residues; that stretch reads DIDEEEDDVPDLVENFD.

It belongs to the NAC-beta family.

The chain is Transcription factor BTF3 homolog 4 (BTF3L4) from Bos taurus (Bovine).